Reading from the N-terminus, the 513-residue chain is ATP synthase subunit alpha (513 aa).

169 to 176 (GDRQTGKT) lines the ATP pocket.

It belongs to the ATPase alpha/beta chains family. F-type ATPases have 2 components, CF(1) - the catalytic core - and CF(0) - the membrane proton channel. CF(1) has five subunits: alpha(3), beta(3), gamma(1), delta(1), epsilon(1). CF(0) has three main subunits: a(1), b(2) and c(9-12). The alpha and beta chains form an alternating ring which encloses part of the gamma chain. CF(1) is attached to CF(0) by a central stalk formed by the gamma and epsilon chains, while a peripheral stalk is formed by the delta and b chains.

The protein resides in the cell inner membrane. The enzyme catalyses ATP + H2O + 4 H(+)(in) = ADP + phosphate + 5 H(+)(out). Its function is as follows. Produces ATP from ADP in the presence of a proton gradient across the membrane. The alpha chain is a regulatory subunit. This chain is ATP synthase subunit alpha, found in Pseudoalteromonas translucida (strain TAC 125).